The chain runs to 410 residues: Mating-type locus allele B5 protein (410 aa).

The segment at 1–110 is variable domain between B alleles; the sequence is MSSDPNFSLT…FNVVSPAVVC (110 aa). The homeobox; TALE-type DNA-binding region spans 107–184; the sequence is AVVCRNLSED…NARRRSGWSH (78 aa). Residues 111–410 are highly conserved between B alleles; the sequence is RNLSEDLPAY…PFLCLSVAFV (300 aa). Disordered stretches follow at residues 201–241, 275–336, and 366–395; these read VRAK…TPAD, NKKT…PELS, and ILQS…PDEV. The segment covering 206–222 has biased composition (low complexity); the sequence is SSSNQSTPPSPTSEYPS. A Nuclear localization signal motif is present at residues 276–308; it reads KKTPKPGMPRPVTTVTKRQPARKTKPAAKPKSR. Residues 294–307 show a composition bias toward basic residues; sequence QPARKTKPAAKPKS. The span at 312–336 shows a compositional bias: polar residues; sequence PRASTTPSIDSTLDSSKLESTPELS. The tract at residues 333 to 410 is not essential for B5 function; that stretch reads PELSMCSTAD…PFLCLSVAFV (78 aa). Positions 375–388 are enriched in basic residues; it reads RGNRKVKALPKRAG.

Belongs to the TALE/M-ATYP homeobox family.

Its subcellular location is the nucleus. The B locus has at least 25 alleles, and any combination of two different B alleles yields a multimeric regulatory protein, that activates genes responsible for the pathogenicity and for the sexual development of the fungus within the corn plant. This chain is Mating-type locus allele B5 protein, found in Mycosarcoma maydis (Corn smut fungus).